The sequence spans 306 residues: Large ribosomal subunit protein uL2m (306 aa).

Residues 1–60 (MALRVVTRALGSLSLTPRIAAVPGPSLLPAAQVTNNVLLQLPSASMLLPSRPLLTSVALS) constitute a mitochondrion transit peptide.

Belongs to the universal ribosomal protein uL2 family. Component of the mitochondrial ribosome large subunit (39S) which comprises a 16S rRNA and about 50 distinct proteins.

It is found in the mitochondrion. The protein is Large ribosomal subunit protein uL2m (MRPL2) of Bos taurus (Bovine).